The chain runs to 134 residues: Small ribosomal subunit protein uS8 (134 aa).

It belongs to the universal ribosomal protein uS8 family. In terms of assembly, part of the 30S ribosomal subunit. Contacts proteins S5 and S12.

Its function is as follows. One of the primary rRNA binding proteins, it binds directly to 16S rRNA central domain where it helps coordinate assembly of the platform of the 30S subunit. In Thermosipho melanesiensis (strain DSM 12029 / CIP 104789 / BI429), this protein is Small ribosomal subunit protein uS8.